The chain runs to 179 residues: Large ribosomal subunit protein uL5 (179 aa).

The protein belongs to the universal ribosomal protein uL5 family. As to quaternary structure, part of the 50S ribosomal subunit; part of the 5S rRNA/L5/L18/L25 subcomplex. Contacts the 5S rRNA and the P site tRNA. Forms a bridge to the 30S subunit in the 70S ribosome.

Its function is as follows. This is one of the proteins that bind and probably mediate the attachment of the 5S RNA into the large ribosomal subunit, where it forms part of the central protuberance. In the 70S ribosome it contacts protein S13 of the 30S subunit (bridge B1b), connecting the 2 subunits; this bridge is implicated in subunit movement. Contacts the P site tRNA; the 5S rRNA and some of its associated proteins might help stabilize positioning of ribosome-bound tRNAs. The protein is Large ribosomal subunit protein uL5 of Alcanivorax borkumensis (strain ATCC 700651 / DSM 11573 / NCIMB 13689 / SK2).